Here is a 381-residue protein sequence, read N- to C-terminus: 1-deoxy-D-xylulose 5-phosphate reductoisomerase (381 aa).

Positions 11, 12, 13, 14, 36, 37, and 121 each coordinate NADPH. K122 is a 1-deoxy-D-xylulose 5-phosphate binding site. An NADPH-binding site is contributed by E123. D147 is a binding site for Mn(2+). Positions 148, 149, 173, and 196 each coordinate 1-deoxy-D-xylulose 5-phosphate. Residue E149 participates in Mn(2+) binding. G202 is an NADPH binding site. The 1-deoxy-D-xylulose 5-phosphate site is built by S209, N214, K215, and E218. Position 218 (E218) interacts with Mn(2+).

The protein belongs to the DXR family. Mg(2+) serves as cofactor. The cofactor is Mn(2+).

It catalyses the reaction 2-C-methyl-D-erythritol 4-phosphate + NADP(+) = 1-deoxy-D-xylulose 5-phosphate + NADPH + H(+). The protein operates within isoprenoid biosynthesis; isopentenyl diphosphate biosynthesis via DXP pathway; isopentenyl diphosphate from 1-deoxy-D-xylulose 5-phosphate: step 1/6. In terms of biological role, catalyzes the NADPH-dependent rearrangement and reduction of 1-deoxy-D-xylulose-5-phosphate (DXP) to 2-C-methyl-D-erythritol 4-phosphate (MEP). The chain is 1-deoxy-D-xylulose 5-phosphate reductoisomerase from Acetivibrio thermocellus (strain ATCC 27405 / DSM 1237 / JCM 9322 / NBRC 103400 / NCIMB 10682 / NRRL B-4536 / VPI 7372) (Clostridium thermocellum).